Consider the following 420-residue polypeptide: Calreticulin (420 aa).

Residues 1–18 (MKWGVVAVLATLVVAASA) form the signal peptide. Cysteine 106 and cysteine 140 are disulfide-bonded. Residues tyrosine 110, lysine 112, tyrosine 131, and aspartate 138 each coordinate an alpha-D-glucoside. 7 consecutive repeat copies span residues 194–205 (VASGSLYEDWDM), 213–224 (DPKASKPEDWDE), 230–241 (DPEDKKPEGWDD), 248–259 (DKDAKKPEDWDD), 263–273 (GTWEPPMIPNP), 277–287 (GEWKAKMIKNP), and 291–301 (GIWVAPDIDNP). A 4 X approximate repeats region spans residues 194-259 (VASGSLYEDW…DAKKPEDWDD (66 aa)). Residues 210 to 220 (TIKDPKASKPE) are compositionally biased toward basic and acidic residues. Residues 210 to 272 (TIKDPKASKP…GTWEPPMIPN (63 aa)) are disordered. Acidic residues predominate over residues 221-230 (DWDEREEIAD). The 3 X approximate repeats stretch occupies residues 263–301 (GTWEPPMIPNPEYKGEWKAKMIKNPAYKGIWVAPDIDNP). Position 321 (glutamate 321) interacts with an alpha-D-glucoside. Positions 357–376 (EEKAMFDKVKKEEDEKKAKD) are enriched in basic and acidic residues. The interval 357–420 (EEKAMFDKVK…EEEESGHDEL (64 aa)) is disordered. 2 stretches are compositionally biased toward acidic residues: residues 385-398 (EAAE…EDKE) and 411-420 (EEEESGHDEL). A Prevents secretion from ER motif is present at residues 417-420 (HDEL).

It belongs to the calreticulin family.

The protein resides in the endoplasmic reticulum lumen. Functionally, molecular calcium-binding chaperone promoting folding, oligomeric assembly and quality control in the ER via the calreticulin/calnexin cycle. This lectin may interact transiently with almost all of the monoglucosylated glycoproteins that are synthesized in the ER. In Chlamydomonas reinhardtii (Chlamydomonas smithii), this protein is Calreticulin.